We begin with the raw amino-acid sequence, 313 residues long: Porphobilinogen deaminase (313 aa).

Residue Cys-242 is modified to S-(dipyrrolylmethanemethyl)cysteine.

It belongs to the HMBS family. As to quaternary structure, monomer. Requires dipyrromethane as cofactor.

The enzyme catalyses 4 porphobilinogen + H2O = hydroxymethylbilane + 4 NH4(+). Its pathway is porphyrin-containing compound metabolism; protoporphyrin-IX biosynthesis; coproporphyrinogen-III from 5-aminolevulinate: step 2/4. Functionally, tetrapolymerization of the monopyrrole PBG into the hydroxymethylbilane pre-uroporphyrinogen in several discrete steps. This Pseudomonas entomophila (strain L48) protein is Porphobilinogen deaminase.